Consider the following 176-residue polypeptide: Ferritin heavy chain B (176 aa).

One can recognise a Ferritin-like diiron domain in the interval glutamine 7–glycine 156. Fe cation is bound by residues glutamate 24, glutamate 59, histidine 62, glutamate 104, and glutamine 138.

Belongs to the ferritin family. As to quaternary structure, oligomer of 24 subunits. There are two types of subunits: L (light) chain and H (heavy) chain. The functional molecule is roughly spherical and contains a central cavity into which the insoluble mineral iron core is deposited.

The protein localises to the cytoplasm. The catalysed reaction is 4 Fe(2+) + O2 + 4 H(+) = 4 Fe(3+) + 2 H2O. Its function is as follows. Stores iron in a soluble, non-toxic, readily available form. Important for iron homeostasis. Has ferroxidase activity. Iron is taken up in the ferrous form and deposited as ferric hydroxides after oxidation. The chain is Ferritin heavy chain B (fth1-b) from Xenopus laevis (African clawed frog).